The primary structure comprises 483 residues: Aspartyl/glutamyl-tRNA(Asn/Gln) amidotransferase subunit B (483 aa).

Belongs to the GatB/GatE family. GatB subfamily. Heterotrimer of A, B and C subunits.

The catalysed reaction is L-glutamyl-tRNA(Gln) + L-glutamine + ATP + H2O = L-glutaminyl-tRNA(Gln) + L-glutamate + ADP + phosphate + H(+). It catalyses the reaction L-aspartyl-tRNA(Asn) + L-glutamine + ATP + H2O = L-asparaginyl-tRNA(Asn) + L-glutamate + ADP + phosphate + 2 H(+). In terms of biological role, allows the formation of correctly charged Asn-tRNA(Asn) or Gln-tRNA(Gln) through the transamidation of misacylated Asp-tRNA(Asn) or Glu-tRNA(Gln) in organisms which lack either or both of asparaginyl-tRNA or glutaminyl-tRNA synthetases. The reaction takes place in the presence of glutamine and ATP through an activated phospho-Asp-tRNA(Asn) or phospho-Glu-tRNA(Gln). The sequence is that of Aspartyl/glutamyl-tRNA(Asn/Gln) amidotransferase subunit B from Rickettsia rickettsii (strain Sheila Smith).